The primary structure comprises 229 residues: Potassium/proton antiporter CemA (229 aa).

A run of 2 helical transmembrane segments spans residues 7 to 27 and 106 to 126; these read LASL…SISF and IISH…YFIL.

It belongs to the CemA family.

The protein resides in the plastid. The protein localises to the chloroplast inner membrane. The enzyme catalyses K(+)(in) + H(+)(out) = K(+)(out) + H(+)(in). Functionally, contributes to K(+)/H(+) antiport activity by supporting proton efflux to control proton extrusion and homeostasis in chloroplasts in a light-dependent manner to modulate photosynthesis. Prevents excessive induction of non-photochemical quenching (NPQ) under continuous-light conditions. Indirectly promotes efficient inorganic carbon uptake into chloroplasts. The protein is Potassium/proton antiporter CemA of Cycas taitungensis (Prince sago).